Consider the following 436-residue polypeptide: Chromosomal replication initiator protein DnaA (436 aa).

Residues 1–80 form a domain I, interacts with DnaA modulators region; the sequence is MSHEAVWQHV…QAPRFELRVV (80 aa). Positions 80 to 100 are domain II; the sequence is VPGVVVQEDIFQAAPAEAPRP. The interval 101 to 317 is domain III, AAA+ region; sequence KLNPKYTFEN…GALMRAIAFA (217 aa). Residues G145, G147, K148, and T149 each coordinate ATP. The tract at residues 318–436 is domain IV, binds dsDNA; that stretch reads SLNGVELTRA…LLRTLREACT (119 aa).

The protein belongs to the DnaA family. Oligomerizes as a right-handed, spiral filament on DNA at oriC.

It is found in the cytoplasm. Functionally, plays an essential role in the initiation and regulation of chromosomal replication. ATP-DnaA binds to the origin of replication (oriC) to initiate formation of the DNA replication initiation complex once per cell cycle. Binds the DnaA box (a 9 base pair repeat at the origin) and separates the double-stranded (ds)DNA. Forms a right-handed helical filament on oriC DNA; dsDNA binds to the exterior of the filament while single-stranded (ss)DNA is stabiized in the filament's interior. The ATP-DnaA-oriC complex binds and stabilizes one strand of the AT-rich DNA unwinding element (DUE), permitting loading of DNA polymerase. After initiation quickly degrades to an ADP-DnaA complex that is not apt for DNA replication. Binds acidic phospholipids. This chain is Chromosomal replication initiator protein DnaA, found in Thermus thermophilus (strain ATCC BAA-163 / DSM 7039 / HB27).